The primary structure comprises 93 residues: Small ribosomal subunit protein bS18 (93 aa).

The segment covering 1 to 11 (MAPSARNRKPG) has biased composition (basic residues). The segment at 1–27 (MAPSARNRKPGARSMAKAAALRKPKKK) is disordered.

The protein belongs to the bacterial ribosomal protein bS18 family. Part of the 30S ribosomal subunit. Forms a tight heterodimer with protein bS6.

Its function is as follows. Binds as a heterodimer with protein bS6 to the central domain of the 16S rRNA, where it helps stabilize the platform of the 30S subunit. This chain is Small ribosomal subunit protein bS18, found in Salinispora tropica (strain ATCC BAA-916 / DSM 44818 / JCM 13857 / NBRC 105044 / CNB-440).